The sequence spans 129 residues: Cytochrome c oxidase subunit 5B, mitochondrial (129 aa).

The transit peptide at 1–31 (MASRLLRGAGTLAAQALRARGPSGAAAMRSM) directs the protein to the mitochondrion. An N6-acetyllysine mark is found at Lys-68 and Lys-86. Cys-91, Cys-93, Cys-113, and Cys-116 together coordinate Zn(2+). Residue Lys-121 is modified to N6-acetyllysine.

This sequence belongs to the cytochrome c oxidase subunit 5B family. As to quaternary structure, component of the cytochrome c oxidase (complex IV, CIV), a multisubunit enzyme composed of 14 subunits. The complex is composed of a catalytic core of 3 subunits MT-CO1, MT-CO2 and MT-CO3, encoded in the mitochondrial DNA, and 11 supernumerary subunits COX4I1 (or COX4I2), COX5A, COX5B, COX6A1 (or COX6A2), COX6B1 (or COX6B2), COX6C, COX7A2 (or COX7A1), COX7B, COX7C, COX8A and NDUFA4, which are encoded in the nuclear genome. The complex exists as a monomer or a dimer and forms supercomplexes (SCs) in the inner mitochondrial membrane with NADH-ubiquinone oxidoreductase (complex I, CI) and ubiquinol-cytochrome c oxidoreductase (cytochrome b-c1 complex, complex III, CIII), resulting in different assemblies (supercomplex SCI(1)III(2)IV(1) and megacomplex MCI(2)III(2)IV(2)).

Its subcellular location is the mitochondrion inner membrane. It functions in the pathway energy metabolism; oxidative phosphorylation. Its function is as follows. Component of the cytochrome c oxidase, the last enzyme in the mitochondrial electron transport chain which drives oxidative phosphorylation. The respiratory chain contains 3 multisubunit complexes succinate dehydrogenase (complex II, CII), ubiquinol-cytochrome c oxidoreductase (cytochrome b-c1 complex, complex III, CIII) and cytochrome c oxidase (complex IV, CIV), that cooperate to transfer electrons derived from NADH and succinate to molecular oxygen, creating an electrochemical gradient over the inner membrane that drives transmembrane transport and the ATP synthase. Cytochrome c oxidase is the component of the respiratory chain that catalyzes the reduction of oxygen to water. Electrons originating from reduced cytochrome c in the intermembrane space (IMS) are transferred via the dinuclear copper A center (CU(A)) of subunit 2 and heme A of subunit 1 to the active site in subunit 1, a binuclear center (BNC) formed by heme A3 and copper B (CU(B)). The BNC reduces molecular oxygen to 2 water molecules using 4 electrons from cytochrome c in the IMS and 4 protons from the mitochondrial matrix. This Homo sapiens (Human) protein is Cytochrome c oxidase subunit 5B, mitochondrial (COX5B).